A 263-amino-acid polypeptide reads, in one-letter code: Small ribosomal subunit protein eS1 (263 aa).

Positions 235–254 are enriched in basic and acidic residues; the sequence is HGEGGGGKREAGDKSERPEG. The segment at 235 to 263 is disordered; the sequence is HGEGGGGKREAGDKSERPEGYEPPVQESV.

Belongs to the eukaryotic ribosomal protein eS1 family. In terms of assembly, component of the small ribosomal subunit. Mature ribosomes consist of a small (40S) and a large (60S) subunit. The 40S subunit contains about 33 different proteins and 1 molecule of RNA (18S). The 60S subunit contains about 49 different proteins and 3 molecules of RNA (28S, 5.8S and 5S).

It is found in the cytoplasm. This is Small ribosomal subunit protein eS1 from Bombyx mandarina (Wild silk moth).